The primary structure comprises 175 residues: Alpha-crystallin B chain (175 aa).

At Met-1 the chain carries N-acetylmethionine. Ser-19 bears the Phosphoserine mark. An O-linked (GlcNAc) serine glycan is attached at Ser-41. 2 positions are modified to phosphoserine: Ser-45 and Ser-59. One can recognise a sHSP domain in the interval 56–164; the sequence is RAPSWFDTGL…PERTIPITRE (109 aa). His-83 contacts Zn(2+). Lys-92 bears the N6-acetyllysine mark. Zn(2+)-binding residues include His-104, Glu-106, His-111, and His-119. A disordered region spans residues 142–175; it reads VLTVNGPRKQVSGPERTIPITREEKPAVTAAPKK. N6-acetyllysine is present on Lys-166. The O-linked (GlcNAc) threonine glycan is linked to Thr-170.

This sequence belongs to the small heat shock protein (HSP20) family. As to quaternary structure, heteromer composed of three CRYAA and one CRYAB subunits. Aggregates with homologous proteins, including the small heat shock protein HSPB1, to form large heteromeric complexes. Inter-subunit bridging via zinc ions enhances stability, which is crucial as there is no protein turn over in the lens. Interacts with HSPBAP1 and TTN/titin. Interacts with TMEM109; in the cellular response to DNA damage. Interacts with DES; binds rapidly during early stages of DES filament assembly and a reduced binding seen in the later stages. Interacts with TMED10; the interaction mediates the translocation from the cytoplasm into the ERGIC (endoplasmic reticulum-Golgi intermediate compartment) and thereby secretion. Interacts with ATP6V1A and with MTOR, forming a ternary complex.

It localises to the cytoplasm. Its subcellular location is the nucleus. It is found in the secreted. The protein resides in the lysosome. Its function is as follows. May contribute to the transparency and refractive index of the lens. Has chaperone-like activity, preventing aggregation of various proteins under a wide range of stress conditions. In lens epithelial cells, stabilizes the ATP6V1A protein, preventing its degradation by the proteasome. The chain is Alpha-crystallin B chain (CRYAB) from Macaca fascicularis (Crab-eating macaque).